The following is a 481-amino-acid chain: Probable glycine dehydrogenase (decarboxylating) subunit 2 (481 aa).

Lys-265 is subject to N6-(pyridoxal phosphate)lysine.

The protein belongs to the GcvP family. C-terminal subunit subfamily. In terms of assembly, the glycine cleavage system is composed of four proteins: P, T, L and H. In this organism, the P 'protein' is a heterodimer of two subunits. Requires pyridoxal 5'-phosphate as cofactor.

The enzyme catalyses N(6)-[(R)-lipoyl]-L-lysyl-[glycine-cleavage complex H protein] + glycine + H(+) = N(6)-[(R)-S(8)-aminomethyldihydrolipoyl]-L-lysyl-[glycine-cleavage complex H protein] + CO2. The glycine cleavage system catalyzes the degradation of glycine. The P protein binds the alpha-amino group of glycine through its pyridoxal phosphate cofactor; CO(2) is released and the remaining methylamine moiety is then transferred to the lipoamide cofactor of the H protein. This Thermosipho melanesiensis (strain DSM 12029 / CIP 104789 / BI429) protein is Probable glycine dehydrogenase (decarboxylating) subunit 2.